A 330-amino-acid polypeptide reads, in one-letter code: AH receptor-interacting protein (330 aa).

Residues 31-121 form the PPIase FKBP-type domain; the sequence is GTKATFHYRT…KDPLEGQRHC (91 aa). A Phosphoserine modification is found at serine 43. TPR repeat units follow at residues 179 to 212, 231 to 264, and 265 to 298; these read VPLI…LKNL, TPLL…YDDN, and VKAY…DPAL.

Interacts with RET in the pituitary gland; this interaction prevents the formation of the AIP-survivin complex. In terms of tissue distribution, widely expressed. Higher levels seen in the heart, placenta and skeletal muscle. Not expressed in the liver.

It localises to the cytoplasm. May play a positive role in AHR-mediated (aromatic hydrocarbon receptor) signaling, possibly by influencing its receptivity for ligand and/or its nuclear targeting. In terms of biological role, cellular negative regulator of the hepatitis B virus (HBV) X protein. The sequence is that of AH receptor-interacting protein (AIP) from Homo sapiens (Human).